The primary structure comprises 320 residues: Nicotianamine synthase 3 (320 aa).

It belongs to the nicotianamine synthase (NAS)-like family. In shoots.

It catalyses the reaction 3 S-adenosyl-L-methionine = nicotianamine + 3 S-methyl-5'-thioadenosine + 3 H(+). In terms of biological role, synthesizes nicotianamine, a polyamine which serves as a sensor for the physiological iron status within the plant, and/or might be involved in the transport of iron. The sequence is that of Nicotianamine synthase 3 (NAS3) from Arabidopsis thaliana (Mouse-ear cress).